A 523-amino-acid polypeptide reads, in one-letter code: Factor arrest protein 8 (523 aa).

Residues threonine 26 to glutamate 76 adopt a coiled-coil conformation. The segment at asparagine 61–proline 80 is disordered. Residues glutamate 71–proline 80 show a composition bias toward basic and acidic residues. At serine 115 the chain carries Phosphoserine. Threonine 132 is subject to Phosphothreonine. The tract at residues alanine 150 to valine 171 is disordered. Positions glutamine 160–valine 171 are enriched in polar residues.

In terms of assembly, component of a complex at least composed of FAR3, FAR7, FAR8, FAR10, FAR11 and VPS64.

Its subcellular location is the cytoplasm. It localises to the endoplasmic reticulum. Its function is as follows. Participates in the control of the reentry into the cell cycle following pheromone treatment. This Saccharomyces cerevisiae (strain ATCC 204508 / S288c) (Baker's yeast) protein is Factor arrest protein 8 (FAR8).